Consider the following 1395-residue polypeptide: G2/mitotic-specific cyclin-B3 (1395 aa).

The tract at residues 1-59 is disordered; that stretch reads MLLPLPPQSSKPVPKKSQSSKIVPSHHDPSEKTGENCQTKISPSSLQESPSSLQGALKK. The span at 10–23 shows a compositional bias: low complexity; it reads SKPVPKKSQSSKIV. Basic and acidic residues predominate over residues 25–34; the sequence is SHHDPSEKTG. Positions 42–54 are enriched in low complexity; the sequence is SPSSLQESPSSLQ. Positions 60 to 68 match the D-box motif; sequence RSAFEDLTN. Disordered regions lie at residues 418 to 464 and 1074 to 1122; these read LSIK…PTEE and ATMT…DSSD. Basic and acidic residues predominate over residues 419–431; the sequence is SIKEKPSTEKESF. Positions 1082 to 1093 are enriched in low complexity; the sequence is SRTTTESSACES.

It belongs to the cyclin family. Cyclin AB subfamily. As to quaternary structure, interacts with CDK2 kinase. Post-translationally, ubiquitinated. Ubiquitination leads to its degradation during anaphase entry, after degradation of CCNB1. In terms of tissue distribution, testis specific. In testis, it is expressed in developing germ cells, but not in Leydig cells. Weakly or not expressed in other tissues.

The protein localises to the nucleus. Functionally, cyclins are positive regulatory subunits of the cyclin-dependent kinases (CDKs), and thereby play an essential role in the control of the cell cycle, notably via their destruction during cell division. Its tissue specificity suggest that it may be required during early meiotic prophase I. This chain is G2/mitotic-specific cyclin-B3 (CCNB3), found in Homo sapiens (Human).